Reading from the N-terminus, the 86-residue chain is Putative membrane protein insertion efficiency factor (86 aa).

The interval 66–86 (FSKGGFDPVPPHDGVPGKKED) is disordered.

It belongs to the UPF0161 family.

It localises to the cell inner membrane. Its function is as follows. Could be involved in insertion of integral membrane proteins into the membrane. This is Putative membrane protein insertion efficiency factor from Chlorobium luteolum (strain DSM 273 / BCRC 81028 / 2530) (Pelodictyon luteolum).